We begin with the raw amino-acid sequence, 718 residues long: Methionine--tRNA ligase (718 aa).

Residues 12-22 carry the 'HIGH' region motif; that stretch reads PYANGDIHLGH. The Zn(2+) site is built by cysteine 143, cysteine 146, cysteine 156, and cysteine 159. A 'KMSKS' region motif is present at residues 349–353; that stretch reads KMSKS. Lysine 352 serves as a coordination point for ATP. Residues 573–599 form a disordered region; that stretch reads AAPAAKVASSQQRHAEKQQHEAQSAET. Positions 608–718 constitute a tRNA-binding domain; sequence DFTKVDLRIA…TGAASGMRVK (111 aa).

This sequence belongs to the class-I aminoacyl-tRNA synthetase family. MetG type 1 subfamily. In terms of assembly, homodimer. Requires Zn(2+) as cofactor.

It localises to the cytoplasm. It catalyses the reaction tRNA(Met) + L-methionine + ATP = L-methionyl-tRNA(Met) + AMP + diphosphate. In terms of biological role, is required not only for elongation of protein synthesis but also for the initiation of all mRNA translation through initiator tRNA(fMet) aminoacylation. This Aromatoleum aromaticum (strain DSM 19018 / LMG 30748 / EbN1) (Azoarcus sp. (strain EbN1)) protein is Methionine--tRNA ligase.